Here is a 134-residue protein sequence, read N- to C-terminus: Small ribosomal subunit protein uS11 (134 aa).

It belongs to the universal ribosomal protein uS11 family. Part of the 30S ribosomal subunit. Interacts with proteins S7 and S18. Binds to IF-3.

Located on the platform of the 30S subunit, it bridges several disparate RNA helices of the 16S rRNA. Forms part of the Shine-Dalgarno cleft in the 70S ribosome. The chain is Small ribosomal subunit protein uS11 from Paraburkholderia xenovorans (strain LB400).